The chain runs to 297 residues: Nucleotide-binding protein CJA_2809 (297 aa).

8-15 (GLSGSGKT) lines the ATP pocket. 59-62 (DVRN) contributes to the GTP binding site.

The protein belongs to the RapZ-like family.

Displays ATPase and GTPase activities. This Cellvibrio japonicus (strain Ueda107) (Pseudomonas fluorescens subsp. cellulosa) protein is Nucleotide-binding protein CJA_2809.